Here is a 360-residue protein sequence, read N- to C-terminus: Photosystem II protein D1 (360 aa).

A run of 3 helical transmembrane segments spans residues 29–46 (YIGW…TATT), 118–133 (HFLL…EWEL), and 142–156 (WIFV…AASA). H118 contacts chlorophyll a. Y126 serves as a coordination point for pheophytin a. Residues D170 and E189 each coordinate [CaMn4O5] cluster. A helical transmembrane segment spans residues 197–218 (FHMAGVAGVFGGSLFSAMHGSL). H198 serves as a coordination point for chlorophyll a. Residues H215 and 264-265 (SF) contribute to the a quinone site. A Fe cation-binding site is contributed by H215. H272 provides a ligand contact to Fe cation. Residues 274–288 (FLAAWPVVRIWLTAL) form a helical membrane-spanning segment. Residues H332, E333, D342, and A344 each coordinate [CaMn4O5] cluster. The propeptide occupies 345–360 (AGEVLPVAVSAPAVHA).

It belongs to the reaction center PufL/M/PsbA/D family. PSII is composed of 1 copy each of membrane proteins PsbA, PsbB, PsbC, PsbD, PsbE, PsbF, PsbH, PsbI, PsbJ, PsbK, PsbL, PsbM, PsbT, PsbX, PsbY, PsbZ, Psb30/Ycf12, at least 3 peripheral proteins of the oxygen-evolving complex and a large number of cofactors. It forms dimeric complexes. It depends on The D1/D2 heterodimer binds P680, chlorophylls that are the primary electron donor of PSII, and subsequent electron acceptors. It shares a non-heme iron and each subunit binds pheophytin, quinone, additional chlorophylls, carotenoids and lipids. D1 provides most of the ligands for the Mn4-Ca-O5 cluster of the oxygen-evolving complex (OEC). There is also a Cl(-1) ion associated with D1 and D2, which is required for oxygen evolution. The PSII complex binds additional chlorophylls, carotenoids and specific lipids. as a cofactor. Post-translationally, tyr-161 forms a radical intermediate that is referred to as redox-active TyrZ, YZ or Y-Z. In terms of processing, C-terminally processed by CTPA; processing is essential to allow assembly of the oxygen-evolving complex and thus photosynthetic growth.

It localises to the plastid. It is found in the chloroplast thylakoid membrane. The catalysed reaction is 2 a plastoquinone + 4 hnu + 2 H2O = 2 a plastoquinol + O2. Photosystem II (PSII) is a light-driven water:plastoquinone oxidoreductase that uses light energy to abstract electrons from H(2)O, generating O(2) and a proton gradient subsequently used for ATP formation. It consists of a core antenna complex that captures photons, and an electron transfer chain that converts photonic excitation into a charge separation. The D1/D2 (PsbA/PsbD) reaction center heterodimer binds P680, the primary electron donor of PSII as well as several subsequent electron acceptors. This is Photosystem II protein D1 from Bumilleriopsis filiformis (Yellow-green alga).